We begin with the raw amino-acid sequence, 664 residues long: DNA ligase (664 aa).

Residues 32–36 and 80–81 each bind NAD(+); these read DKEYD and SL. Lysine 122 (N6-AMP-lysine intermediate) is an active-site residue. Residues arginine 144, glutamate 178, and lysine 314 each contribute to the NAD(+) site. Positions 407, 410, 423, and 429 each coordinate Zn(2+). The BRCT domain maps to 587–664; sequence IDENPFMGKT…NEEEFSNKIK (78 aa).

Belongs to the NAD-dependent DNA ligase family. LigA subfamily. It depends on Mg(2+) as a cofactor. Requires Mn(2+) as cofactor.

It carries out the reaction NAD(+) + (deoxyribonucleotide)n-3'-hydroxyl + 5'-phospho-(deoxyribonucleotide)m = (deoxyribonucleotide)n+m + AMP + beta-nicotinamide D-nucleotide.. DNA ligase that catalyzes the formation of phosphodiester linkages between 5'-phosphoryl and 3'-hydroxyl groups in double-stranded DNA using NAD as a coenzyme and as the energy source for the reaction. It is essential for DNA replication and repair of damaged DNA. In Clostridium botulinum (strain Kyoto / Type A2), this protein is DNA ligase.